Consider the following 1898-residue polypeptide: Receptor-type tyrosine-protein phosphatase F (1898 aa).

Residues 1–29 form the signal peptide; sequence MTPEPAPGRTMVPLVPALVMLGLVAGAHG. Residues 30 to 1254 lie on the Extracellular side of the membrane; sequence DSKPVFVKVP…QQQEEPELLW (1225 aa). 3 Ig-like C2-type domains span residues 33 to 123, 135 to 224, and 232 to 314; these read PVFV…AKLS, PSID…ANLY, and PRFS…AQVT. Cys54 and Cys107 are oxidised to a cystine. 68 to 77 contacts heparin; the sequence is KKGKKVSSQR. N-linked (GlcNAc...) asparagine glycosylation is present at Asn117. Residues Cys156 and Cys207 are joined by a disulfide bond. 2 N-linked (GlcNAc...) asparagine glycosylation sites follow: Asn250 and Asn295. An intrachain disulfide couples Cys253 to Cys298. 8 Fibronectin type-III domains span residues 321-411, 416-510, 514-604, 609-706, 711-810, 811-905, 909-1001, and 1005-1089; these read PPID…TGEQ, PPRR…TQQG, QPAD…TAQS, PPQK…TDED, PPRK…TTGA, VPGR…PEDV, FPQN…TMPV, and FAKN…TAPD. The interval 399–418 is disordered; sequence PPSEAVRARTGEQAPSSPPR. Residues 693–713 form a disordered region; it reads GPESSPVLVRTDEDVPSGPPR. An N-linked (GlcNAc...) asparagine glycan is attached at Asn721. N-linked (GlcNAc...) asparagine glycosylation is found at Asn941 and Asn957. A helical transmembrane segment spans residues 1255–1275; the sequence is VTGPVLAVILIVLIVIAILLF. The Cytoplasmic portion of the chain corresponds to 1276–1898; it reads KRKRTHSPSS…YLGSFDHYAT (623 aa). Position 1296 is a phosphoserine (Ser1296). Tyrosine-protein phosphatase domains follow at residues 1343–1598 and 1630–1889; these read FSQE…LLEA and MELE…ALEY. Residues Asp1507, 1539–1545, and Gln1583 each bind substrate; that span reads CSAGVGR. Cys1539 serves as the catalytic Phosphocysteine intermediate. The active-site Phosphocysteine intermediate is the Cys1830.

The protein belongs to the protein-tyrosine phosphatase family. Receptor class 2A subfamily. Interacts with GRIP1. Interacts with PPFIA1, PPFIA2 and PPFIA3. Interacts with INSR.

Its subcellular location is the membrane. The enzyme catalyses O-phospho-L-tyrosyl-[protein] + H2O = L-tyrosyl-[protein] + phosphate. In terms of biological role, possible cell adhesion receptor. It possesses an intrinsic protein tyrosine phosphatase activity (PTPase) and dephosphorylates EPHA2 regulating its activity. The first PTPase domain has enzymatic activity, while the second one seems to affect the substrate specificity of the first one. The sequence is that of Receptor-type tyrosine-protein phosphatase F (PTPRF) from Bos taurus (Bovine).